A 584-amino-acid polypeptide reads, in one-letter code: Aspartate--tRNA(Asp/Asn) ligase (584 aa).

L-aspartate is bound at residue Glu-177. The tract at residues 201–204 (QLFK) is aspartate. Arg-223 contacts L-aspartate. Residues 223–225 (RDE) and Gln-232 each bind ATP. His-447 is an L-aspartate binding site. An ATP-binding site is contributed by Glu-481. Arg-488 lines the L-aspartate pocket. Residue 533 to 536 (GLDR) coordinates ATP.

Belongs to the class-II aminoacyl-tRNA synthetase family. Type 1 subfamily. In terms of assembly, homodimer.

The protein localises to the cytoplasm. The enzyme catalyses tRNA(Asx) + L-aspartate + ATP = L-aspartyl-tRNA(Asx) + AMP + diphosphate. Aspartyl-tRNA synthetase with relaxed tRNA specificity since it is able to aspartylate not only its cognate tRNA(Asp) but also tRNA(Asn). Reaction proceeds in two steps: L-aspartate is first activated by ATP to form Asp-AMP and then transferred to the acceptor end of tRNA(Asp/Asn). The protein is Aspartate--tRNA(Asp/Asn) ligase of Chlamydia pneumoniae (Chlamydophila pneumoniae).